Consider the following 288-residue polypeptide: uncharacterized protein (288 aa).

Over residues 1–12 the composition is skewed to basic and acidic residues; sequence MTEGRCAQHPDG. A disordered region spans residues 1-20; sequence MTEGRCAQHPDGLDVQDVCD.

The protein belongs to the class IV-like SAM-binding methyltransferase superfamily. RNA methyltransferase TrmH family.

This is an uncharacterized protein from Mycobacterium bovis (strain ATCC BAA-935 / AF2122/97).